Reading from the N-terminus, the 67-residue chain is Protein AaeX (67 aa).

2 helical membrane-spanning segments follow: residues Leu-3–Ile-23 and Gly-39–Phe-59.

It belongs to the AaeX family.

The protein resides in the cell membrane. In Yersinia pseudotuberculosis serotype O:1b (strain IP 31758), this protein is Protein AaeX.